The following is a 426-amino-acid chain: Histidine--tRNA ligase (426 aa).

Belongs to the class-II aminoacyl-tRNA synthetase family. As to quaternary structure, homodimer.

The protein resides in the cytoplasm. It carries out the reaction tRNA(His) + L-histidine + ATP = L-histidyl-tRNA(His) + AMP + diphosphate + H(+). The sequence is that of Histidine--tRNA ligase from Malacoplasma penetrans (strain HF-2) (Mycoplasma penetrans).